Reading from the N-terminus, the 98-residue chain is Large ribosomal subunit protein bL25 (98 aa).

The tract at residues 1 to 22 is disordered; it reads MANFVLNATARNEDKQGKGASR.

Belongs to the bacterial ribosomal protein bL25 family. Part of the 50S ribosomal subunit; part of the 5S rRNA/L5/L18/L25 subcomplex. Contacts the 5S rRNA. Binds to the 5S rRNA independently of L5 and L18.

Functionally, this is one of the proteins that binds to the 5S RNA in the ribosome where it forms part of the central protuberance. This is Large ribosomal subunit protein bL25 from Acinetobacter baylyi (strain ATCC 33305 / BD413 / ADP1).